A 152-amino-acid chain; its full sequence is Snaclec lebecin subunit alpha (152 aa).

The signal sequence occupies residues 1–23 (MGRSISVSFGLLVVFLSLSGTGA). 3 cysteine pairs are disulfide-bonded: C27–C38, C54–C147, and C122–C139. In terms of domain architecture, C-type lectin spans 34–148 (YEGGCYYVFD…CELAYHFICS (115 aa)).

Heterodimer with the beta subunit (AC W5XCJ6); disulfide-linked. In terms of tissue distribution, expressed by the venom gland.

It localises to the secreted. Functionally, inhibits human breast cancer cells (MDA-MB231) migration and proliferation, as well as their adhesion to fibrinogen and fibronectin. This inhibition may be due to the binding to receptors of the integrin family, probably alpha-v/beta-3 (ITGAV/ITGB3) (40% inhibition of cell adhesion) and alpha-5/beta-1 (ITGA5/ITGB1) (by comparison with lebectin). This Macrovipera lebetinus (Levantine viper) protein is Snaclec lebecin subunit alpha.